The sequence spans 327 residues: Ribosomal RNA small subunit methyltransferase H (327 aa).

S-adenosyl-L-methionine contacts are provided by residues 36–38, Asp61, Phe88, Asp114, and Gln121; that span reads GGH.

It belongs to the methyltransferase superfamily. RsmH family.

The protein localises to the cytoplasm. The enzyme catalyses cytidine(1402) in 16S rRNA + S-adenosyl-L-methionine = N(4)-methylcytidine(1402) in 16S rRNA + S-adenosyl-L-homocysteine + H(+). In terms of biological role, specifically methylates the N4 position of cytidine in position 1402 (C1402) of 16S rRNA. This is Ribosomal RNA small subunit methyltransferase H from Chlorobium phaeovibrioides (strain DSM 265 / 1930) (Prosthecochloris vibrioformis (strain DSM 265)).